Consider the following 410-residue polypeptide: Kelch domain-containing protein 10 (410 aa).

Residues 1 to 40 (MSAAQGWDRNRRRGGGAAGGASGVSGAGAAGGGRGTGQLN) are disordered. Arginine 13 is subject to Omega-N-methylarginine. Positions 15 to 36 (GGAAGGASGVSGAGAAGGGRGT) are enriched in gly residues. Kelch repeat units lie at residues 87–154 (GPDN…DVHV), 155–198 (CNVK…GYIY), 199–260 (STDL…IHAY), 261–319 (NLET…LQTF), 320–364 (QWVK…GSLF), and 365–403 (KIWL…GLTQ). The interaction with CUL2 stretch occupies residues 369 to 410 (VVPSLLELAWEKLLAAFPNLANLSRTQLLHLGLTQELIERLK).

It belongs to the KLHDC10 family. In terms of assembly, component of a CRL2 E3 ubiquitin-protein ligase complex, also named ECS (Elongin BC-CUL2/5-SOCS-box protein) complex, composed of CUL2, Elongin BC (ELOB and ELOC), RBX1 and substrate-specific adapter KLHDC10. Interacts (via the 6 Kelch repeats) with PPP5C.

It is found in the nucleus. It localises to the cytoplasm. It functions in the pathway protein modification; protein ubiquitination. Substrate-recognition component of a Cul2-RING (CRL2) E3 ubiquitin-protein ligase complex of the DesCEND (destruction via C-end degrons) pathway, which recognizes a C-degron located at the extreme C-terminus of target proteins, leading to their ubiquitination and degradation. The C-degron recognized by the DesCEND pathway is usually a motif of less than ten residues and can be present in full-length proteins, truncated proteins or proteolytically cleaved forms. The CRL2(KLHDC10) complex specifically recognizes proteins with a proline-glycine (Pro-Gly) or an alanine tail (CAT tail) at the C-terminus, leading to their ubiquitination and degradation. The CRL2(KLHDC10) complex is involved in the ribosome-associated quality control (RQC) pathway, which mediates the extraction of incompletely synthesized nascent chains from stalled ribosomes: CRL2(KLHDC10) acts downstream of NEMF and recognizes CAT tails associated with stalled nascent chains, leading to their ubiquitination and degradation. Participates in the oxidative stress-induced cell death through MAP3K5 activation. Inhibits PPP5C phosphatase activity on MAP3K5. Acts as a regulator of necroptosis. The chain is Kelch domain-containing protein 10 from Rattus norvegicus (Rat).